The primary structure comprises 206 residues: Guanylate kinase (206 aa).

The Guanylate kinase-like domain maps to 7-185; sequence GLLIVISGPS…AVEKIRAIII (179 aa). Residue 14–21 participates in ATP binding; that stretch reads GPSGAGKG.

The protein belongs to the guanylate kinase family.

The protein localises to the cytoplasm. The enzyme catalyses GMP + ATP = GDP + ADP. Its function is as follows. Essential for recycling GMP and indirectly, cGMP. This is Guanylate kinase from Caldanaerobacter subterraneus subsp. tengcongensis (strain DSM 15242 / JCM 11007 / NBRC 100824 / MB4) (Thermoanaerobacter tengcongensis).